We begin with the raw amino-acid sequence, 119 residues long: Ribosome-binding factor A (119 aa).

It belongs to the RbfA family. As to quaternary structure, monomer. Binds 30S ribosomal subunits, but not 50S ribosomal subunits or 70S ribosomes.

The protein resides in the cytoplasm. Its function is as follows. One of several proteins that assist in the late maturation steps of the functional core of the 30S ribosomal subunit. Associates with free 30S ribosomal subunits (but not with 30S subunits that are part of 70S ribosomes or polysomes). Required for efficient processing of 16S rRNA. May interact with the 5'-terminal helix region of 16S rRNA. The polypeptide is Ribosome-binding factor A (Pelodictyon phaeoclathratiforme (strain DSM 5477 / BU-1)).